A 128-amino-acid chain; its full sequence is Large ribosomal subunit protein mL55 (128 aa).

A mitochondrion-targeting transit peptide spans 1–33 (MAAVGSLLGRLRQSTVKATGPALRRLHTSSWRA). S85 carries the phosphoserine modification.

It belongs to the mitochondrion-specific ribosomal protein mL55 family. Component of the mitochondrial large ribosomal subunit (mt-LSU). Mature mammalian 55S mitochondrial ribosomes consist of a small (28S) and a large (39S) subunit. The 28S small subunit contains a 12S ribosomal RNA (12S mt-rRNA) and 30 different proteins. The 39S large subunit contains a 16S rRNA (16S mt-rRNA), a copy of mitochondrial valine transfer RNA (mt-tRNA(Val)), which plays an integral structural role, and 52 different proteins.

Its subcellular location is the mitochondrion. This Homo sapiens (Human) protein is Large ribosomal subunit protein mL55 (MRPL55).